Reading from the N-terminus, the 222-residue chain is Small ribosomal subunit protein uS2 (222 aa).

The protein belongs to the universal ribosomal protein uS2 family.

The polypeptide is Small ribosomal subunit protein uS2 (Karelsulcia muelleri (strain GWSS) (Sulcia muelleri)).